Reading from the N-terminus, the 158-residue chain is MGAVTTDVEVASSVPAQTIYKGFLLDMDNIIPKVLPQAIKSIEIISGDGGAGTIKKVTLGEVSQFTVVKQRIDEIDAEALKYSYSIIEGDLLLGIIESITSKFTVVPTDGGCIVKNTTIYTPIGDAVIPEENVKEATEQSGMVFKAIEAYLLANPGAY.

It belongs to the BetVI family.

This chain is Pathogenesis-related protein 2 (PR2), found in Petroselinum crispum (Parsley).